The following is a 338-amino-acid chain: Lipoyl synthase (338 aa).

The interval 1–24 (MTTVQEAVPNLIPTQDATPRPAPK) is disordered. [4Fe-4S] cluster is bound by residues Cys84, Cys89, Cys95, Cys110, Cys114, Cys117, and Ser324. One can recognise a Radical SAM core domain in the interval 96–313 (FSGGTATFMI…AEEGYKMGFK (218 aa)).

The protein belongs to the radical SAM superfamily. Lipoyl synthase family. The cofactor is [4Fe-4S] cluster.

The protein resides in the cytoplasm. The enzyme catalyses [[Fe-S] cluster scaffold protein carrying a second [4Fe-4S](2+) cluster] + N(6)-octanoyl-L-lysyl-[protein] + 2 oxidized [2Fe-2S]-[ferredoxin] + 2 S-adenosyl-L-methionine + 4 H(+) = [[Fe-S] cluster scaffold protein] + N(6)-[(R)-dihydrolipoyl]-L-lysyl-[protein] + 4 Fe(3+) + 2 hydrogen sulfide + 2 5'-deoxyadenosine + 2 L-methionine + 2 reduced [2Fe-2S]-[ferredoxin]. It participates in protein modification; protein lipoylation via endogenous pathway; protein N(6)-(lipoyl)lysine from octanoyl-[acyl-carrier-protein]: step 2/2. Functionally, catalyzes the radical-mediated insertion of two sulfur atoms into the C-6 and C-8 positions of the octanoyl moiety bound to the lipoyl domains of lipoate-dependent enzymes, thereby converting the octanoylated domains into lipoylated derivatives. The protein is Lipoyl synthase of Pseudomonas putida (strain ATCC 700007 / DSM 6899 / JCM 31910 / BCRC 17059 / LMG 24140 / F1).